Consider the following 85-residue polypeptide: Large ribosomal subunit protein bL27 (85 aa).

A disordered region spans residues M1–G22.

The protein belongs to the bacterial ribosomal protein bL27 family.

This Aliivibrio fischeri (strain ATCC 700601 / ES114) (Vibrio fischeri) protein is Large ribosomal subunit protein bL27.